Consider the following 490-residue polypeptide: Velvet complex subunit 2 (490 aa).

2 disordered regions span residues 23–148 (LYHH…ESQQ) and 295–316 (YQTQPTYSQGSSAYPSNGTYGP). Positions 54–70 (PPSHHFQLHPGHGHHQQ) are enriched in basic residues. The segment covering 112-131 (AAEHRDHPQHALDEPSRSHD) has biased composition (basic and acidic residues). A Velvet domain is found at 164–474 (ATGRRYHLDV…AAQGIKIPIR (311 aa)). Residues 295 to 313 (YQTQPTYSQGSSAYPSNGT) show a composition bias toward polar residues.

This sequence belongs to the velvet family. VelB subfamily. Component of the heterotrimeric velvet complex composed of LAE1, VEL1 and VEL2; VEL1 acting as a bridging protein between LAE1 and VEL2. Forms a heterodimeric complex with VOS1; the formation of the VEL2-VOS1 complex is light-dependent.

It localises to the nucleus. Its subcellular location is the cytoplasm. Functionally, component of the velvet transcription factor complex that controls sexual/asexual developmental ratio in response to light, promoting sexual development in the darkness while stimulating asexual sporulation under illumination. The velvet complex acts as a global regulator for secondary metabolite gene expression. Component of the VEL2-VOS1 heterodimeric complex that plays a dual role in activating genes associated with spore maturation and repressing certain development-associated genes. The VEL2-VOS1 complex binds DNA through the DNA-binding domain of VOS1 that recognizes an 11-nucleotide consensus sequence 5'-CTGGCCGCGGC-3' consisting of two motifs in the promoters of key developmental regulatory genes. Regulates expression of cellulase-encoding genes such as the cellobiohydrolase-encoding genes cbh1 and cbh2, the endo-beta-1,4-glucanase-encoding genes egl1 and egl2, and the beta-glucosidase-encoding gene bgl1. The polypeptide is Velvet complex subunit 2 (Hypocrea jecorina (strain QM6a) (Trichoderma reesei)).